A 240-amino-acid chain; its full sequence is Ubiquinone biosynthesis O-methyltransferase (240 aa).

Positions 44, 64, 85, and 129 each coordinate S-adenosyl-L-methionine.

The protein belongs to the methyltransferase superfamily. UbiG/COQ3 family.

The catalysed reaction is a 3-demethylubiquinol + S-adenosyl-L-methionine = a ubiquinol + S-adenosyl-L-homocysteine + H(+). It carries out the reaction a 3-(all-trans-polyprenyl)benzene-1,2-diol + S-adenosyl-L-methionine = a 2-methoxy-6-(all-trans-polyprenyl)phenol + S-adenosyl-L-homocysteine + H(+). It participates in cofactor biosynthesis; ubiquinone biosynthesis. Its function is as follows. O-methyltransferase that catalyzes the 2 O-methylation steps in the ubiquinone biosynthetic pathway. In Escherichia coli O81 (strain ED1a), this protein is Ubiquinone biosynthesis O-methyltransferase.